Reading from the N-terminus, the 339-residue chain is Annexin A2 (339 aa).

At Ser-2 the chain carries N-acetylserine. The S100A10-binding site stretch occupies residues 2 to 24 (STVHEILCKLSLEGDHSTPPSAY). Tyr-24 is subject to Phosphotyrosine; by SRC. Ser-26 carries the post-translational modification Phosphoserine; by PKC. 2 Annexin repeats span residues 33 to 104 (FDAE…GLLK) and 105 to 176 (TPAQ…ALAK). Lys-49 carries the N6-acetyllysine; alternate modification. Lys-49 participates in a covalent cross-link: Glycyl lysine isopeptide (Lys-Gly) (interchain with G-Cter in SUMO1); alternate. Lys-49 participates in a covalent cross-link: Glycyl lysine isopeptide (Lys-Gly) (interchain with G-Cter in SUMO2); alternate. Position 152 is an N6-acetyllysine (Lys-152). Residue Ser-184 is modified to Phosphoserine. Annexin repeat units lie at residues 189 to 261 (ELID…NLVQ) and 265 to 336 (NKPL…YLCG). The residue at position 199 (Tyr-199) is a Phosphotyrosine. N6-acetyllysine is present on Lys-227.

It belongs to the annexin family. As to quaternary structure, heterotetramer containing 2 light chains of S100A10/p11 and 2 heavy chains of ANXA2/p36. Interacts with ATP1B1. Interacts with DYSF. Interacts with COCH. Interacts (via repeat Annexin 1) with PCSK9 (via the C-terminal domain); the interaction inhibits the degradation of LDLR. Interacts with CEACAM1 (via the cytoplasmic domain); this interaction is regulated by phosphorylation of CEACAM1. Interacts with APPL2 and APPL1; targets APPL2 to endosomes and acting in parallel to RAB5A. Interacts with S100A4. May interact with UBAP2. ISGylated. As to expression, expressed strongly in velvet antler reserve mesenchyme.

The protein localises to the secreted. It localises to the extracellular space. It is found in the extracellular matrix. Its subcellular location is the basement membrane. Functionally, calcium-regulated membrane-binding protein whose affinity for calcium is greatly enhanced by anionic phospholipids. It binds two calcium ions with high affinity. May be involved in heat-stress response. Inhibits PCSK9-enhanced LDLR degradation, probably reduces PCSK9 protein levels via a translational mechanism but also competes with LDLR for binding with PCSK9. Binds to endosomes damaged by phagocytosis of particulate wear debris and participates in endosomal membrane stabilization, thereby limiting NLRP3 inflammasome activation. Required for endothelial cell surface plasmin generation and may support fibrinolytic surveillance and neoangiogenesis. This chain is Annexin A2 (ANXA2), found in Cervus elaphus (Red deer).